The following is a 289-amino-acid chain: S-methyl-5'-thioadenosine phosphorylase (289 aa).

Phosphate-binding positions include S24, 66-67 (RH), and 99-100 (TA). M202 lines the substrate pocket. Residue T203 coordinates phosphate. Substrate is bound at residue 226–228 (DYD).

The protein belongs to the PNP/MTAP phosphorylase family. MTAP subfamily. As to quaternary structure, homotrimer.

Its subcellular location is the cytoplasm. The protein localises to the nucleus. The catalysed reaction is S-methyl-5'-thioadenosine + phosphate = 5-(methylsulfanyl)-alpha-D-ribose 1-phosphate + adenine. It participates in amino-acid biosynthesis; L-methionine biosynthesis via salvage pathway; S-methyl-5-thio-alpha-D-ribose 1-phosphate from S-methyl-5'-thioadenosine (phosphorylase route): step 1/1. In terms of biological role, catalyzes the reversible phosphorylation of S-methyl-5'-thioadenosine (MTA) to adenine and 5-methylthioribose-1-phosphate. Involved in the breakdown of MTA, a major by-product of polyamine biosynthesis. Responsible for the first step in the methionine salvage pathway after MTA has been generated from S-adenosylmethionine. Has broad substrate specificity with 6-aminopurine nucleosides as preferred substrates. The chain is S-methyl-5'-thioadenosine phosphorylase from Drosophila pseudoobscura pseudoobscura (Fruit fly).